We begin with the raw amino-acid sequence, 252 residues long: 5-oxoprolinase subunit A 1 (252 aa).

It belongs to the LamB/PxpA family. As to quaternary structure, forms a complex composed of PxpA, PxpB and PxpC.

It catalyses the reaction 5-oxo-L-proline + ATP + 2 H2O = L-glutamate + ADP + phosphate + H(+). Its function is as follows. Catalyzes the cleavage of 5-oxoproline to form L-glutamate coupled to the hydrolysis of ATP to ADP and inorganic phosphate. In Pseudomonas putida (strain ATCC 47054 / DSM 6125 / CFBP 8728 / NCIMB 11950 / KT2440), this protein is 5-oxoprolinase subunit A 1.